The following is a 436-amino-acid chain: 3-ketoacyl-CoA thiolase (436 aa).

Residue Cys-99 is the Acyl-thioester intermediate of the active site. Catalysis depends on proton acceptor residues His-392 and Cys-422.

Belongs to the thiolase-like superfamily. Thiolase family. In terms of assembly, heterotetramer of two alpha chains (FadJ) and two beta chains (FadI).

The protein resides in the cytoplasm. The enzyme catalyses an acyl-CoA + acetyl-CoA = a 3-oxoacyl-CoA + CoA. Its pathway is lipid metabolism; fatty acid beta-oxidation. Catalyzes the final step of fatty acid oxidation in which acetyl-CoA is released and the CoA ester of a fatty acid two carbons shorter is formed. This is 3-ketoacyl-CoA thiolase from Shigella flexneri serotype 5b (strain 8401).